A 319-amino-acid polypeptide reads, in one-letter code: HTH-type transcriptional regulator YidZ (319 aa).

Positions 8 to 65 (LDLNLLLCLQLLMQERSVTKAAKRINVTPSAVSKSLAKLRAWFDDPLFVNSPLGLSPT) constitute an HTH lysR-type domain. Residues 25–44 (VTKAAKRINVTPSAVSKSLA) constitute a DNA-binding region (H-T-H motif).

The protein belongs to the LysR transcriptional regulatory family.

Involved in anaerobic NO protection. This Escherichia coli (strain K12 / MC4100 / BW2952) protein is HTH-type transcriptional regulator YidZ.